A 700-amino-acid chain; its full sequence is Elongation factor G 1 (700 aa).

The tr-type G domain maps to 8–290 (QNYRNIGISA…AVIEFMPSPI (283 aa)). GTP-binding positions include 17 to 24 (AHIDAGKT), 88 to 92 (DTPGH), and 142 to 145 (NKMD).

This sequence belongs to the TRAFAC class translation factor GTPase superfamily. Classic translation factor GTPase family. EF-G/EF-2 subfamily.

It localises to the cytoplasm. Its function is as follows. Catalyzes the GTP-dependent ribosomal translocation step during translation elongation. During this step, the ribosome changes from the pre-translocational (PRE) to the post-translocational (POST) state as the newly formed A-site-bound peptidyl-tRNA and P-site-bound deacylated tRNA move to the P and E sites, respectively. Catalyzes the coordinated movement of the two tRNA molecules, the mRNA and conformational changes in the ribosome. This is Elongation factor G 1 from Polaromonas sp. (strain JS666 / ATCC BAA-500).